Consider the following 140-residue polypeptide: Actin-depolymerizing factor 8 (140 aa).

Residue serine 6 is modified to Phosphoserine. In terms of domain architecture, ADF-H spans 7–139 (GMHVNDECKI…SLDIIKGRLN (133 aa)).

It belongs to the actin-binding proteins ADF family. Expressed in the root trichoblast cells and developed root hairs.

Its subcellular location is the cytoplasm. It is found in the cytoskeleton. In terms of biological role, actin-depolymerizing protein. Severs actin filaments (F-actin) and binds to actin monomers. This is Actin-depolymerizing factor 8 (ADF8) from Arabidopsis thaliana (Mouse-ear cress).